A 59-amino-acid polypeptide reads, in one-letter code: Gonadotropin-releasing hormone receptor (59 aa).

The Cytoplasmic portion of the chain corresponds to 1–2; the sequence is VA. Residues 3-23 traverse the membrane as a helical segment; sequence FATSFTVCWTPYYVLGIWYWF. The Extracellular portion of the chain corresponds to 24–37; it reads DPEMLNRVSDPVNH. The chain crosses the membrane as a helical span at residues 38-58; that stretch reads FFFLFAFLNPCFDPLIYGYFS. Leu-59 is a topological domain (cytoplasmic).

The protein belongs to the G-protein coupled receptor 1 family.

It localises to the cell membrane. Its function is as follows. Receptor for gonadotropin releasing hormone (GnRH) that mediates the action of GnRH to stimulate the secretion of the gonadotropic hormones luteinizing hormone (LH) and follicle-stimulating hormone (FSH). This receptor mediates its action by association with G-proteins that activate a phosphatidylinositol-calcium second messenger system. The sequence is that of Gonadotropin-releasing hormone receptor (GNRHR) from Macaca mulatta (Rhesus macaque).